The chain runs to 590 residues: V-type ATP synthase alpha chain (590 aa).

231–238 (GPFGSGKT) lines the ATP pocket.

Belongs to the ATPase alpha/beta chains family.

It catalyses the reaction ATP + H2O + 4 H(+)(in) = ADP + phosphate + 5 H(+)(out). Its function is as follows. Produces ATP from ADP in the presence of a proton gradient across the membrane. The V-type alpha chain is a catalytic subunit. This is V-type ATP synthase alpha chain from Clostridium botulinum (strain Langeland / NCTC 10281 / Type F).